A 98-amino-acid polypeptide reads, in one-letter code: Large ribosomal subunit protein uL23 (98 aa).

It belongs to the universal ribosomal protein uL23 family. As to quaternary structure, part of the 50S ribosomal subunit. Contacts protein L29, and trigger factor when it is bound to the ribosome.

Its function is as follows. One of the early assembly proteins it binds 23S rRNA. One of the proteins that surrounds the polypeptide exit tunnel on the outside of the ribosome. Forms the main docking site for trigger factor binding to the ribosome. In Legionella pneumophila (strain Paris), this protein is Large ribosomal subunit protein uL23.